The sequence spans 664 residues: UvrABC system protein B (664 aa).

The Helicase ATP-binding domain occupies 25 to 182; that stretch reads KSFGEGKNKI…RKFLHIQYAR (158 aa). 38–45 contributes to the ATP binding site; sequence GVTGSGKT. The Beta-hairpin motif lies at 91 to 114; that stretch reads YYDYYQPEAYVPSSDTFIEKDMSM. The 167-residue stretch at 429-595 folds into the Helicase C-terminal domain; it reads QIEDLLNEIR…TIQKEIHDIL (167 aa). One can recognise a UVR domain in the interval 625-660; it reads DKLREALKREMLRYANDMDFEKAAMFRDKMLALGPD.

The protein belongs to the UvrB family. Forms a heterotetramer with UvrA during the search for lesions. Interacts with UvrC in an incision complex.

Its subcellular location is the cytoplasm. Functionally, the UvrABC repair system catalyzes the recognition and processing of DNA lesions. A damage recognition complex composed of 2 UvrA and 2 UvrB subunits scans DNA for abnormalities. Upon binding of the UvrA(2)B(2) complex to a putative damaged site, the DNA wraps around one UvrB monomer. DNA wrap is dependent on ATP binding by UvrB and probably causes local melting of the DNA helix, facilitating insertion of UvrB beta-hairpin between the DNA strands. Then UvrB probes one DNA strand for the presence of a lesion. If a lesion is found the UvrA subunits dissociate and the UvrB-DNA preincision complex is formed. This complex is subsequently bound by UvrC and the second UvrB is released. If no lesion is found, the DNA wraps around the other UvrB subunit that will check the other stand for damage. This Leptospira biflexa serovar Patoc (strain Patoc 1 / Ames) protein is UvrABC system protein B.